A 160-amino-acid chain; its full sequence is MGVYTYENEFTSDIPAPKLFKAFVLDADNLIPKIAPQAVKCAEILEGDGGPGTIKKITFGEGSHYGYVKHKIHSIDKVNHTYSYSLIEGDALSENIEKIDYETKLVSAPHGGTIIKTTSKYHTKGDVEIKEEHVKAGKEKAAHLFKLIEGYLKDHPSEYN.

The protein belongs to the BetVI family. As to quaternary structure, monomer. Interacts with AP. Highly expressed in roots. Expressed in open flowers. Expressed at low levels in leaves, flower buds and fruits.

Involved in the control of flavonoid biosynthesis in fruits, probably by binding directly to natural flavonoids. Binds the natural flavonoid quercetin-3-O-glucuronide with affinities in the low micromolar range. This Fragaria ananassa (Strawberry) protein is Major strawberry allergen Fra a 1-E.